The primary structure comprises 461 residues: L-cystine uptake protein TcyP (461 aa).

10 consecutive transmembrane segments (helical) span residues 1–21, 33–53, 72–92, 104–124, 183–203, 224–244, 262–282, 337–357, 369–389, and 393–413; these read MTLFVVINIIVMLGLMALLYM, VFTALGIGIVFGFALHFIYGS, YVKLLQMIVMPLVFISILGAF, ISGLIIGLLIATTAVAAAVGI, PTSTIAVVIFAAFLGIAYLGV, IIMRVVTLILRLTPYGVLAIM, FVIASYAALIVMFIIHLLLIT, LSIGQNGCAGIYPAMLAIMIA, FLFTVIAVVAISSFGVAGVGG, and FAALLVLSALNMPVALAGLLI.

It belongs to the dicarboxylate/amino acid:cation symporter (DAACS) (TC 2.A.23) family.

The protein localises to the membrane. Its function is as follows. Mediates uptake of L-cystine, the oxidized form of L-cysteine. This chain is L-cystine uptake protein TcyP (tcyP), found in Bacillus licheniformis (strain ATCC 14580 / DSM 13 / JCM 2505 / CCUG 7422 / NBRC 12200 / NCIMB 9375 / NCTC 10341 / NRRL NRS-1264 / Gibson 46).